We begin with the raw amino-acid sequence, 992 residues long: UPF0182 protein Mb3215c (992 aa).

7 helical membrane-spanning segments follow: residues 17–39 (RILI…LIDA), 59–81 (LATR…FGGL), 113–135 (LVGI…SYWA), 169–191 (LMLS…AHYI), 212–229 (LVSL…AYWL), 255–277 (VLPA…FSAI), and 284–306 (IPAI…WPLI). The segment at 906 to 938 (PTEAAVPPSPAANPPPPASGPQPPPVTAAPPVP) is disordered. The span at 912–938 (PPSPAANPPPPASGPQPPPVTAAPPVP) shows a compositional bias: pro residues.

The protein belongs to the UPF0182 family.

The protein resides in the cell membrane. This chain is UPF0182 protein Mb3215c, found in Mycobacterium bovis (strain ATCC BAA-935 / AF2122/97).